Consider the following 165-residue polypeptide: NADPH-dependent 7-cyano-7-deazaguanine reductase (165 aa).

The active-site Thioimide intermediate is the Cys-56. Residue Asp-63 is the Proton donor of the active site. Residues 78–80 and 97–98 contribute to the substrate site; these read VES and HE.

Belongs to the GTP cyclohydrolase I family. QueF type 1 subfamily.

Its subcellular location is the cytoplasm. It carries out the reaction 7-aminomethyl-7-carbaguanine + 2 NADP(+) = 7-cyano-7-deazaguanine + 2 NADPH + 3 H(+). It functions in the pathway tRNA modification; tRNA-queuosine biosynthesis. Catalyzes the NADPH-dependent reduction of 7-cyano-7-deazaguanine (preQ0) to 7-aminomethyl-7-deazaguanine (preQ1). The polypeptide is NADPH-dependent 7-cyano-7-deazaguanine reductase (Geobacillus thermodenitrificans (strain NG80-2)).